Consider the following 475-residue polypeptide: Ribulose bisphosphate carboxylase large chain (475 aa).

Positions 1–2 are excised as a propeptide; the sequence is MS. At Pro3 the chain carries N-acetylproline. An N6,N6,N6-trimethyllysine modification is found at Lys14. 2 residues coordinate substrate: Asn123 and Thr173. Lys175 (proton acceptor) is an active-site residue. Position 177 (Lys177) interacts with substrate. Mg(2+)-binding residues include Lys201, Asp203, and Glu204. An N6-carboxylysine modification is found at Lys201. His294 (proton acceptor) is an active-site residue. Residues Arg295, His327, and Ser379 each coordinate substrate.

It belongs to the RuBisCO large chain family. Type I subfamily. As to quaternary structure, heterohexadecamer of 8 large chains and 8 small chains; disulfide-linked. The disulfide link is formed within the large subunit homodimers. The cofactor is Mg(2+). The disulfide bond which can form in the large chain dimeric partners within the hexadecamer appears to be associated with oxidative stress and protein turnover.

The protein resides in the plastid. It localises to the chloroplast. It carries out the reaction 2 (2R)-3-phosphoglycerate + 2 H(+) = D-ribulose 1,5-bisphosphate + CO2 + H2O. It catalyses the reaction D-ribulose 1,5-bisphosphate + O2 = 2-phosphoglycolate + (2R)-3-phosphoglycerate + 2 H(+). Its function is as follows. RuBisCO catalyzes two reactions: the carboxylation of D-ribulose 1,5-bisphosphate, the primary event in carbon dioxide fixation, as well as the oxidative fragmentation of the pentose substrate in the photorespiration process. Both reactions occur simultaneously and in competition at the same active site. This is Ribulose bisphosphate carboxylase large chain from Pinus radiata (Monterey pine).